A 567-amino-acid polypeptide reads, in one-letter code: Proline--tRNA ligase (567 aa).

Belongs to the class-II aminoacyl-tRNA synthetase family. ProS type 1 subfamily. In terms of assembly, homodimer.

It localises to the cytoplasm. It catalyses the reaction tRNA(Pro) + L-proline + ATP = L-prolyl-tRNA(Pro) + AMP + diphosphate. Catalyzes the attachment of proline to tRNA(Pro) in a two-step reaction: proline is first activated by ATP to form Pro-AMP and then transferred to the acceptor end of tRNA(Pro). As ProRS can inadvertently accommodate and process non-cognate amino acids such as alanine and cysteine, to avoid such errors it has two additional distinct editing activities against alanine. One activity is designated as 'pretransfer' editing and involves the tRNA(Pro)-independent hydrolysis of activated Ala-AMP. The other activity is designated 'posttransfer' editing and involves deacylation of mischarged Ala-tRNA(Pro). The misacylated Cys-tRNA(Pro) is not edited by ProRS. This Campylobacter curvus (strain 525.92) protein is Proline--tRNA ligase.